Reading from the N-terminus, the 242-residue chain is Probable transcriptional regulatory protein EUBREC_1961 (242 aa).

Belongs to the TACO1 family.

The protein resides in the cytoplasm. This Agathobacter rectalis (strain ATCC 33656 / DSM 3377 / JCM 17463 / KCTC 5835 / VPI 0990) (Eubacterium rectale) protein is Probable transcriptional regulatory protein EUBREC_1961.